Reading from the N-terminus, the 244-residue chain is uncharacterized protein (244 aa).

An FCP1 homology domain is found at 19 to 196 (ATDNRKLVIL…ACVIRYLKHL (178 aa)).

This is an uncharacterized protein from Schizosaccharomyces pombe (strain 972 / ATCC 24843) (Fission yeast).